We begin with the raw amino-acid sequence, 335 residues long: Probable cytosolic iron-sulfur protein assembly protein Ciao1 (335 aa).

WD repeat units follow at residues 12 to 51 (GHKGRIWGVAWHPKGNVFASCGEDKAIRIWSLTGNTWSTK), 57 to 96 (GHKRTIREIRWSPCGQYLASASFDATTAIWSKSSGEFECN), 101 to 140 (GHENEVKSVSWSRSGGLLATCSRDKSVWIWEVAGDDEFEC), 146 to 185 (PHTQDVKRVVWHPTKDVLASASYDNTIKMFAEEPIDNDWD), 192 to 231 (SHTSTVWGIDFDADGERLVSCSDDTTIKIWKAYHPGNTAG), 250 to 289 (QHSRAIYDVSWCKLTGLIATACGDDGIRIFKETSDSKPDE), and 301 to 335 (AHDQDVNSVQWNPVVAGQLISCSDDGTIKIWKVSE).

It belongs to the WD repeat CIA1 family.

In terms of biological role, essential component of the cytosolic iron-sulfur (Fe/S) protein assembly machinery. Required for the maturation of extramitochondrial Fe/S proteins. This chain is Probable cytosolic iron-sulfur protein assembly protein Ciao1, found in Drosophila simulans (Fruit fly).